The sequence spans 287 residues: ATP synthase gamma chain (287 aa).

It belongs to the ATPase gamma chain family. F-type ATPases have 2 components, CF(1) - the catalytic core - and CF(0) - the membrane proton channel. CF(1) has five subunits: alpha(3), beta(3), gamma(1), delta(1), epsilon(1). CF(0) has three main subunits: a, b and c.

It localises to the cell inner membrane. Functionally, produces ATP from ADP in the presence of a proton gradient across the membrane. The gamma chain is believed to be important in regulating ATPase activity and the flow of protons through the CF(0) complex. The chain is ATP synthase gamma chain from Tolumonas auensis (strain DSM 9187 / NBRC 110442 / TA 4).